Here is a 149-residue protein sequence, read N- to C-terminus: Endoribonuclease YbeY (149 aa).

Zn(2+) contacts are provided by histidine 115, histidine 119, and histidine 125.

Belongs to the endoribonuclease YbeY family. It depends on Zn(2+) as a cofactor.

It is found in the cytoplasm. In terms of biological role, single strand-specific metallo-endoribonuclease involved in late-stage 70S ribosome quality control and in maturation of the 3' terminus of the 16S rRNA. This chain is Endoribonuclease YbeY, found in Mycoplasmopsis pulmonis (strain UAB CTIP) (Mycoplasma pulmonis).